Reading from the N-terminus, the 99-residue chain is Prostate and testis expressed protein 14 (99 aa).

A signal peptide spans 1–21 (MGKNILLLLLGLSFVIGFLQA). The region spanning 22–99 (LRCLECDMLN…CHDQSLCNEF (78 aa)) is the UPAR/Ly6 domain. 5 disulfide bridges follow: C24–C51, C27–C36, C43–C69, C73–C89, and C90–C96. N40 carries N-linked (GlcNAc...) asparagine glycosylation. N-linked (GlcNAc...) asparagine glycans are attached at residues N75 and N82.

It belongs to the PATE family. As to quaternary structure, monomer.

The protein resides in the secreted. The protein is Prostate and testis expressed protein 14 of Rattus norvegicus (Rat).